We begin with the raw amino-acid sequence, 269 residues long: 2-keto-4-pentenoate hydratase (269 aa).

The protein belongs to the hydratase/decarboxylase family. MhpD subfamily. Requires a divalent metal cation as cofactor.

The catalysed reaction is (S)-4-hydroxy-2-oxopentanoate = (2Z)-2-hydroxypenta-2,4-dienoate + H2O. It participates in aromatic compound metabolism; 3-phenylpropanoate degradation. Its function is as follows. Catalyzes the conversion of 2-hydroxypentadienoic acid (enolic form of 2-oxopent-4-enoate) to 4-hydroxy-2-ketopentanoic acid. The sequence is that of 2-keto-4-pentenoate hydratase from Paraburkholderia xenovorans (strain LB400).